The sequence spans 431 residues: Septin-11 (431 aa).

A2 carries the post-translational modification N-acetylalanine. Position 9 is a phosphoserine (S9). Positions 38–304 (QGFCFNILCV…ELYRRCKLEE (267 aa)) constitute a Septin-type G domain. The tract at residues 48-55 (GETGIGKS) is G1 motif. GTP-binding positions include 48–55 (GETGIGKS), G103, 184–192 (KADTIAKNE), G238, and R253. Positions 100 to 103 (DTVG) are G3 motif. The segment at 183 to 186 (AKAD) is G4 motif. Residues 320 to 413 (QETYEAKRNE…LLQSQAQQSG (94 aa)) adopt a coiled-coil conformation. Positions 400 to 431 (AAAQLLQSQAQQSGAQQTKKDKDKKNPWLCTE) are disordered. Residues 401–416 (AAQLLQSQAQQSGAQQ) show a composition bias toward low complexity.

The protein belongs to the TRAFAC class TrmE-Era-EngA-EngB-Septin-like GTPase superfamily. Septin GTPase family. In terms of assembly, septins polymerize into heterooligomeric protein complexes that form filaments, and can associate with cellular membranes, actin filaments and microtubules. Forms homooligomers. GTPase activity is required for filament formation. Interacts with SEPTIN7, SEPTIN9 and SEPTIN12. Expressed in the cerebral cortex (at protein level).

Its subcellular location is the cytoplasm. It localises to the cytoskeleton. The protein localises to the synapse. The protein resides in the cell projection. It is found in the dendritic spine. Its subcellular location is the axon. Filament-forming cytoskeletal GTPase. May play a role in cytokinesis (Potential). May play a role in the cytoarchitecture of neurons, including dendritic arborization and dendritic spines, and in GABAergic synaptic connectivity. In Mus musculus (Mouse), this protein is Septin-11.